A 362-amino-acid polypeptide reads, in one-letter code: 2-oxoglutarate-dependent dioxygenase lolO1 (362 aa).

Residues 199-312 (TWNYFLGQPV…RYSLVFFGHL (114 aa)) enclose the Fe2OG dioxygenase domain. Residues histidine 222, aspartate 224, and histidine 280 each coordinate Fe cation. Arginine 303 is a binding site for 2-oxoglutarate.

Belongs to the iron/ascorbate-dependent oxidoreductase family. Fe(2+) is required as a cofactor.

The protein operates within alkaloid biosynthesis. Its function is as follows. 2-oxoglutarate-dependent dioxygenase; part of the gene cluster that mediates the biosynthesis of loline alkaloids, potent insecticidal agents composed of a pyrrolizidine ring system and an uncommon ether bridge linking carbons 2 and 7. Lolines are structurally differentiated by the various modifications of the L-amino group and include norloline, loline, N-methylloline, N-acetylloline, N-acetylnorloline, and N-formylloline. The first committed step is the condensation of O-acetyl-L-homoserine (derived from L-aspartic acid) and L-proline, probably catalyzed by the gamma-type pyridoxal 5'-phosphate(PLP)-dependent enzyme lolC, to give the diamino diacid, NACPP. Ensuing cyclization, decarboxylation, and acetylation steps yield 1-exo-acetamidopyrrolizidine (AcAP). LolO is required for installation of the ether bridge upon the pathway intermediate, 1-exo-acetamidopyrrolizidine (AcAP). In sequential 2-oxoglutarate- and O(2)-consuming steps, lolO removes hydrogens from C2 and C7 of AcAP to form both carbon-oxygen bonds in N-acetylnorloline (NANL), the precursor to all other lolines. The enzymes lolD, lolE, lolF and lolT have also been proposed to be involved in the ether-bridge installation. Further processing of the exocyclic moiety of NANL by fungal N-acetamidase (LolN), methyltransferase (LolM), and cytochrome P450 (LolP) enzymes, with occasional involvement of a plant acetyltransferase, generates the other known lolines. LolN transforms NANL to norlonine which is monomethylated and dimethylated to respectively lonine and N-methyllonine (NML) by lolM. LolP catalyzes hydroxylation of the methyl group in N-methylloline (NML) and further oxygenation to N-formylloline (NFL). A plant acetyltransferase is responsible for the acetylation of loline to form N-acetylloline (NAL). LolA might interact with aspartate kinase to prevent feedback inhibition of its activity by these end products and thereby promote production of l-homoserine from l-aspartate. This Epichloe uncinata (Endophyte fungus) protein is 2-oxoglutarate-dependent dioxygenase lolO1.